The chain runs to 350 residues: 4-hydroxythreonine-4-phosphate dehydrogenase (350 aa).

The substrate site is built by His-138 and Thr-139. A divalent metal cation-binding residues include His-173, His-218, and His-273. The substrate site is built by Lys-281, Asn-290, and Arg-299.

It belongs to the PdxA family. Homodimer. Zn(2+) is required as a cofactor. Requires Mg(2+) as cofactor. It depends on Co(2+) as a cofactor.

Its subcellular location is the cytoplasm. It catalyses the reaction 4-(phosphooxy)-L-threonine + NAD(+) = 3-amino-2-oxopropyl phosphate + CO2 + NADH. It participates in cofactor biosynthesis; pyridoxine 5'-phosphate biosynthesis; pyridoxine 5'-phosphate from D-erythrose 4-phosphate: step 4/5. Its function is as follows. Catalyzes the NAD(P)-dependent oxidation of 4-(phosphooxy)-L-threonine (HTP) into 2-amino-3-oxo-4-(phosphooxy)butyric acid which spontaneously decarboxylates to form 3-amino-2-oxopropyl phosphate (AHAP). This is 4-hydroxythreonine-4-phosphate dehydrogenase from Xanthobacter autotrophicus (strain ATCC BAA-1158 / Py2).